The chain runs to 195 residues: ATP-dependent Clp protease proteolytic subunit (195 aa).

Catalysis depends on serine 97, which acts as the Nucleophile. Histidine 122 is an active-site residue.

This sequence belongs to the peptidase S14 family. Fourteen ClpP subunits assemble into 2 heptameric rings which stack back to back to give a disk-like structure with a central cavity, resembling the structure of eukaryotic proteasomes.

The protein resides in the cytoplasm. It carries out the reaction Hydrolysis of proteins to small peptides in the presence of ATP and magnesium. alpha-casein is the usual test substrate. In the absence of ATP, only oligopeptides shorter than five residues are hydrolyzed (such as succinyl-Leu-Tyr-|-NHMec, and Leu-Tyr-Leu-|-Tyr-Trp, in which cleavage of the -Tyr-|-Leu- and -Tyr-|-Trp bonds also occurs).. Functionally, cleaves peptides in various proteins in a process that requires ATP hydrolysis. Has a chymotrypsin-like activity. Plays a major role in the degradation of misfolded proteins. The polypeptide is ATP-dependent Clp protease proteolytic subunit (Lactobacillus gasseri (strain ATCC 33323 / DSM 20243 / BCRC 14619 / CIP 102991 / JCM 1131 / KCTC 3163 / NCIMB 11718 / NCTC 13722 / AM63)).